Here is a 183-residue protein sequence, read N- to C-terminus: Type II secretion system protein H (183 aa).

Residues 1–5 (MRQRG) constitute a propeptide, leader sequence. The residue at position 6 (Phe-6) is an N-methylphenylalanine. A helical transmembrane segment spans residues 6-26 (FTVLEMMLVVLLMGSAASLVI).

Type II secretion is composed of four main components: the outer membrane complex, the inner membrane complex, the cytoplasmic secretion ATPase and the periplasm-spanning pseudopilus. Interacts with core component PulG. Interacts with PulM. In terms of processing, cleaved by prepilin peptidase. Post-translationally, methylated by prepilin peptidase at the amino group of the N-terminal phenylalanine once the leader sequence is cleaved by prepilin peptidase.

It localises to the cell inner membrane. Its function is as follows. Component of the type II secretion system required for the energy-dependent secretion of extracellular factors such as proteases and toxins from the periplasm. Part of the pseudopilus tip complex that is critical for the recognition and binding of secretion substrates. This Klebsiella michiganensis (strain ATCC 8724 / DSM 4798 / JCM 20051 / NBRC 3318 / NRRL B-199 / KCTC 1686 / BUCSAV 143 / CCM 1901) protein is Type II secretion system protein H (pulH).